The following is a 591-amino-acid chain: Aspartate--tRNA(Asp/Asn) ligase (591 aa).

Glu-176 contributes to the L-aspartate binding site. Residues 200 to 203 form an aspartate region; the sequence is QLFK. An L-aspartate-binding site is contributed by Arg-222. Residues 222–224 and Gln-231 contribute to the ATP site; that span reads RDE. His-450 provides a ligand contact to L-aspartate. An ATP-binding site is contributed by Glu-484. Residue Arg-491 coordinates L-aspartate. 536-539 is an ATP binding site; the sequence is GLDR.

This sequence belongs to the class-II aminoacyl-tRNA synthetase family. Type 1 subfamily. Homodimer.

Its subcellular location is the cytoplasm. It catalyses the reaction tRNA(Asx) + L-aspartate + ATP = L-aspartyl-tRNA(Asx) + AMP + diphosphate. In terms of biological role, aspartyl-tRNA synthetase with relaxed tRNA specificity since it is able to aspartylate not only its cognate tRNA(Asp) but also tRNA(Asn). Reaction proceeds in two steps: L-aspartate is first activated by ATP to form Asp-AMP and then transferred to the acceptor end of tRNA(Asp/Asn). The protein is Aspartate--tRNA(Asp/Asn) ligase of Bacillus anthracis (strain A0248).